The primary structure comprises 98 residues: Large ribosomal subunit protein uL23 (98 aa).

Belongs to the universal ribosomal protein uL23 family. In terms of assembly, part of the 50S ribosomal subunit. Contacts protein L29, and trigger factor when it is bound to the ribosome.

One of the early assembly proteins it binds 23S rRNA. One of the proteins that surrounds the polypeptide exit tunnel on the outside of the ribosome. Forms the main docking site for trigger factor binding to the ribosome. The protein is Large ribosomal subunit protein uL23 of Borrelia garinii subsp. bavariensis (strain ATCC BAA-2496 / DSM 23469 / PBi) (Borreliella bavariensis).